The chain runs to 1578 residues: MSSDLKYSLSSEPPQPQVQSPLLKILKGEVSETTELKKLHSFRLCLSSPKIIKQWAQRTLPNGEIVGSITNAQTVNYKTLKPEKGGLFCERVFGPVKDFYCSCGKQKTKQHPKVCPTCGVQYISSQSRRYKMGYIELVSPVTHIWYLKSSPSYISLLLNLKKKNLEALTYCSENLSLNIKSFQNELLFQNVLHLLKANPFALEKGLKKRKKRFLVNSNWFSFIFDNSYLIKANSGFQLKVKDFPFFLITKNQNLQNFMGVCSQSANGNEQILPEMEKQGKNTFQFSPFLTTVQKHGSSENGSFPELKREKDELELFKLIDSFSSKSPSKKKDFFRSEILTAFYKKYSKFHFSRFRSNKKSFLISLFSSSNNWYFNKNQNIGYFSIFNKNFKIFFSLLNYQILLKTIDKNSLANLLSPLFDNYLNDDSQVLFDDSIKKLNLTKNFRSNEDQELSTLLNSCFFLNKIGAIAQSPFSLAFYTQKSEKFYCFSPSFLNPFEKDSLSGKIFSLKKKKILPSQKMFELKPLTLFCSKKTKRNEVESENPNSNHMLPFIAFSKKQRCEEKADFFKQLRMIELESEKSRSPKDLLFLNKFPFKNEKKLKYNLQKRNKLHTLKNPIGNFKFRKYFSLRLDSSLKRSLLIYQIKNFKNGFEHSDFYSENQTSTNFTKFLVSRELEKSSKFSNSLFSFENFAQLLIFIFDFPAALERQRQSFSLRSYSKSANFRSQTSARGEVGGNFNLEVKQSQNYFLDWKLTNNYRNFYQSSEIQNLNCFFISNFLVKNAIPVSPLSLEQFVFNNETQKNLHLGNEDSRFFANLKKPIKKLGLLKNSFLAETLANAKANAHNLKENRTPVIQDKENESQTFSQLFFDQIDQKEGSSLKSKDLNFTNWNNKKITRFIELLEKTLFLKKPGLVNNYYTISQSLQWPCQKDWARFLNYMTNTADKTDSLIPSYLERGISFDLVLTGAGSIKKLLSLFTPMGKKASIEIVAKQINGTLLKLNRDIKRLEDFFKFEIFFIDDQEIIEKVFMKLVILRSLRSKALRRLKVLRPFKGSHVLPEWMVLSVLPILPPALRPIIPLDSQQVAVSDLNKLYQTVLFRNKRVQRFYNDYYSLNFSEEMRYAQRLLQEAVDALIENGKGDSAAITASNNRPLKSLSDMIKGKKGRFRQNLLGKRVDYSGRSVIVVGPKLRLHECGLPKEMAIELFQPFLIRRLIFKEVATNFISAKKLIKSNPESILDILREVMENRPVLLNRAPTLHRLGIQAFQPKLISGRAILLHPLVCAAFNADFDGDQMAVHIPLSFQACAEAWKLMGSRNNLLSPATGEPIILPSQDMVLGCYYLTTLDRVKIKQKLSQSSFLFPFLISKQGVHENLSTISSNSKGIENWILKKPSQKSEIRTLSSFYEINESERATFESKTNDTSILKLQDKKRRETLTFKRNRLSPVDTKLHLMDLSKNKNQNLFLNRFEKRANCKVWSDSNKYYSNWDQVLQSLNQQLIDLHSPIWLRWNFYFEFVLKKESFLEIRLDKYGNSVYINPNYQSYSNSKLEKIVFYIRTTPGRVLMNKLIFEALNKPSLKKSF.

4 residues coordinate Zn(2+): C101, C103, C115, and C118. Mg(2+)-binding residues include D1286, D1288, and D1290.

The protein belongs to the RNA polymerase beta' chain family. RpoC1 subfamily. In plastids the minimal PEP RNA polymerase catalytic core is composed of four subunits: alpha, beta, beta', and beta''. When a (nuclear-encoded) sigma factor is associated with the core the holoenzyme is formed, which can initiate transcription. Requires Mg(2+) as cofactor. It depends on Zn(2+) as a cofactor.

It is found in the plastid. Its subcellular location is the chloroplast. It carries out the reaction RNA(n) + a ribonucleoside 5'-triphosphate = RNA(n+1) + diphosphate. In terms of biological role, DNA-dependent RNA polymerase catalyzes the transcription of DNA into RNA using the four ribonucleoside triphosphates as substrates. The sequence is that of DNA-directed RNA polymerase subunit beta' from Tupiella akineta (Green alga).